We begin with the raw amino-acid sequence, 209 residues long: Translation initiation factor IF-3 (209 aa).

The protein belongs to the IF-3 family. As to quaternary structure, monomer.

The protein localises to the cytoplasm. Functionally, IF-3 binds to the 30S ribosomal subunit and shifts the equilibrium between 70S ribosomes and their 50S and 30S subunits in favor of the free subunits, thus enhancing the availability of 30S subunits on which protein synthesis initiation begins. This is Translation initiation factor IF-3 from Chlorobium phaeobacteroides (strain DSM 266 / SMG 266 / 2430).